The primary structure comprises 61 residues: Truncated 3-beta hydroxy-5-ene steroid dehydrogenase homolog (61 aa).

It belongs to the 3-beta-HSD family.

This chain is Truncated 3-beta hydroxy-5-ene steroid dehydrogenase homolog, found in Variola virus (isolate Human/India/Ind3/1967) (VARV).